The primary structure comprises 236 residues: Protein N-lysine methyltransferase METTL21A (236 aa).

S-adenosyl-L-methionine contacts are provided by residues W47, 73–75 (GAG), D112, W143, and A161.

This sequence belongs to the methyltransferase superfamily. METTL21 family. As to quaternary structure, interacts with heat shock 70 family members; at least some of these proteins are methylation substrates.

Its subcellular location is the cytoplasm. The catalysed reaction is L-lysyl-[protein] + 3 S-adenosyl-L-methionine = N(6),N(6),N(6)-trimethyl-L-lysyl-[protein] + 3 S-adenosyl-L-homocysteine + 3 H(+). Its function is as follows. Protein-lysine methyltransferase that selectively trimethylates residues in heat shock protein 70 (HSP70) family members. Contributes to the in vivo trimethylation of Lys residues in HSPA1 and HSPA8. In vitro methylates 'Lys-561' in HSPA1, 'Lys-564' in HSPA2, 'Lys-585' in HSPA5, 'Lys-563' in HSPA6 and 'Lys-561' in HSPA8. The sequence is that of Protein N-lysine methyltransferase METTL21A (METTL21A) from Pongo abelii (Sumatran orangutan).